The chain runs to 122 residues: Large ribosomal subunit protein uL14 (122 aa).

It belongs to the universal ribosomal protein uL14 family. In terms of assembly, part of the 50S ribosomal subunit. Forms a cluster with proteins L3 and L19. In the 70S ribosome, L14 and L19 interact and together make contacts with the 16S rRNA in bridges B5 and B8.

Binds to 23S rRNA. Forms part of two intersubunit bridges in the 70S ribosome. The chain is Large ribosomal subunit protein uL14 from Thioalkalivibrio sulfidiphilus (strain HL-EbGR7).